A 128-amino-acid polypeptide reads, in one-letter code: Transcription antitermination protein NusB (128 aa).

The protein belongs to the NusB family.

Its function is as follows. Involved in transcription antitermination. Required for transcription of ribosomal RNA (rRNA) genes. Binds specifically to the boxA antiterminator sequence of the ribosomal RNA (rrn) operons. This is Transcription antitermination protein NusB from Listeria innocua serovar 6a (strain ATCC BAA-680 / CLIP 11262).